A 668-amino-acid polypeptide reads, in one-letter code: Ankyrin repeat domain-containing protein OPG023 (668 aa).

ANK repeat units follow at residues 31–64 (FKNNALHAYLFNEHCNNVEVVKLLLDSGTNPLHK), 101–131 (NDFNIFTYMKSKNVDIDLIKVLVEHGFDFSV), 135–166 (KHHSVIENYVMTDDPVPEIIDLFIENGCSVIY), 199–231 (YIISHLYSESDSRSCVNPEVVKCLINHGINPSS), 235–266 (NYCTALQYYIKSSHIDIDIVKLLMKGIDNTAY), 277–311 (RGIMADYLNSDYRYNKDVDLDLVKLFLENGKPHGI), 334–368 (NSDVLQHILIEYITFSDIDISLVEYMLEYGAVVNK), 458–487 (RGETLLHKAVRYNKQSLVSLLLESGSDVNI), and 491–521 (NGYTCIAIAINESRNIELLNMLLCHKPTLDC). The interval 586-666 (GNTMFSLIFT…PYTIKYKIFE (81 aa)) is PRANC/F-box-like.

The protein belongs to the orthopoxvirus OPG023 family. As to quaternary structure, interacts (via N-terminus) with host RELA. Interacts (via PRANC/F-box-like domain) with the SKP1 component of the host SCF ubiquitin ligase complex.

In terms of biological role, substrate-specific adapter of SKP1-containing E3 ubiquitin-protein ligases which mediate the ubiquitination and subsequent proteasomal degradation of host target proteins. Prevents activation and subsequent nuclear localization of NF-kappa-B in infected cells, by targeting NF-kappa-B RELA subunit to the SCF E3 ligase complex. This is Ankyrin repeat domain-containing protein OPG023 (OPG023) from Bos taurus (Bovine).